The chain runs to 114 residues: As-peptide 126 (114 aa).

Residues 1 to 22 (MSRALICSLALLAMLVISGTYA) form the signal peptide. 9 consecutive repeat copies span residues 22 to 29 (ASPAANAE), 30 to 37 (ALAAANAE), 38 to 45 (ASAAANAE), 46 to 53 (PLAAANAE), 54 to 61 (PLAAANAE), 62 to 69 (PLAAANAD), 70 to 77 (PIAAANAE), 78 to 85 (PSAAANAE), and 86 to 93 (PLAAANAE). The segment at 22–93 (ASPAANAEAL…AEPLAAANAE (72 aa)) is 9 X 8 AA approximate tandem repeats of [AP]-[ILS]-[AP]-A-A-N-A-[DE]. The propeptide occupies 23-104 (SPAANAEALA…SAGPSPLAAA (82 aa)). Residues 82–96 (ANAEPLAAANAEPSA) show a composition bias toward low complexity. Residues 82–114 (ANAEPLAAANAEPSAGPSPLAAAQDPPVVKMKG) form a disordered region. Residue Gln-105 is modified to Pyrrolidone carboxylic acid. A Lysine amide modification is found at Lys-113.

In terms of tissue distribution, expressed by the venom gland.

The protein localises to the secreted. In Anoplius samariensis (Solitary wasp), this protein is As-peptide 126.